The sequence spans 221 residues: uncharacterized protein (221 aa).

Residues 1–16 (MESSRWDKDPPGERRP) are compositionally biased toward basic and acidic residues. Residues 1 to 64 (MESSRWDKDP…SHTPQTNTRR (64 aa)) are disordered.

This is an uncharacterized protein from Homo sapiens (Human).